The primary structure comprises 249 residues: Spindlin-4 (249 aa).

Tudor-like domain stretches follow at residues 41–90 (VGCR…LELH), 119–168 (VGKA…YTLL), and 201–246 (VGKQ…YGLV). Histone H3K4me3 and H3R8me2a binding regions lie at residues 80-85 (GKDSVY), Glu-128, and 237-239 (DIH).

This sequence belongs to the SPIN/STSY family. Interacts with C11orf84/SPINDOC. Associates with chromatin.

Its subcellular location is the cytoplasm. The protein resides in the nucleus. Its function is as follows. Binds to acetylated and methylated histones, including H3K4me3 and H4K20me3, probably acting as a histone reader that recognizes chromatin marks to mediate downstream cellular effects. Promotes canonical WNT signaling, and is involved in the down-regulation of cell proliferation. The polypeptide is Spindlin-4 (Spin4) (Mus musculus (Mouse)).